A 141-amino-acid chain; its full sequence is Large ribosomal subunit protein uL11 (141 aa).

Belongs to the universal ribosomal protein uL11 family. As to quaternary structure, part of the ribosomal stalk of the 50S ribosomal subunit. Interacts with L10 and the large rRNA to form the base of the stalk. L10 forms an elongated spine to which L12 dimers bind in a sequential fashion forming a multimeric L10(L12)X complex. Post-translationally, one or more lysine residues are methylated.

In terms of biological role, forms part of the ribosomal stalk which helps the ribosome interact with GTP-bound translation factors. The protein is Large ribosomal subunit protein uL11 of Exiguobacterium sp. (strain ATCC BAA-1283 / AT1b).